Consider the following 165-residue polypeptide: UPF0114 protein in repA1-repA2 intergenic region (165 aa).

Transmembrane regions (helical) follow at residues 15-35 (LMFPVYIGLAFGFVLLTVKFF), 53-73 (LVLIVLSLIDIALVGGLLVMV), and 136-156 (IMWCVVIHLTFVLSAFGMAYI).

The protein belongs to the UPF0114 family.

Its subcellular location is the cell membrane. The chain is UPF0114 protein in repA1-repA2 intergenic region from Buchnera aphidicola subsp. Thelaxes suberi.